The chain runs to 414 residues: Riboflavin biosynthesis protein RibBA (414 aa).

The tract at residues 1–204 is DHBP synthase; it reads MTRFDTIERA…IADMIAWRRK (204 aa). D-ribulose 5-phosphate contacts are provided by residues 28 to 29, Asp-33, 141 to 145, and Glu-165; these read RE and RPGHT. Glu-29 lines the Mg(2+) pocket. His-144 is a Mg(2+) binding site. A GTP cyclohydrolase II region spans residues 205–414; it reads HEKQVVRVAE…DDLDLGETAQ (210 aa). 255–259 is a GTP binding site; the sequence is RVHSE. Zn(2+) contacts are provided by Cys-260, Cys-271, and Cys-273. Residues Gln-276, 299–301, and Thr-321 each bind GTP; that span reads EGR. Asp-333 serves as the catalytic Proton acceptor; for GTP cyclohydrolase activity. The active-site Nucleophile; for GTP cyclohydrolase activity is the Arg-335. Positions 356 and 361 each coordinate GTP.

In the N-terminal section; belongs to the DHBP synthase family. It in the C-terminal section; belongs to the GTP cyclohydrolase II family. Mg(2+) serves as cofactor. Mn(2+) is required as a cofactor. It depends on Zn(2+) as a cofactor.

It catalyses the reaction D-ribulose 5-phosphate = (2S)-2-hydroxy-3-oxobutyl phosphate + formate + H(+). The enzyme catalyses GTP + 4 H2O = 2,5-diamino-6-hydroxy-4-(5-phosphoribosylamino)-pyrimidine + formate + 2 phosphate + 3 H(+). It participates in cofactor biosynthesis; riboflavin biosynthesis; 2-hydroxy-3-oxobutyl phosphate from D-ribulose 5-phosphate: step 1/1. Its pathway is cofactor biosynthesis; riboflavin biosynthesis; 5-amino-6-(D-ribitylamino)uracil from GTP: step 1/4. Functionally, catalyzes the conversion of D-ribulose 5-phosphate to formate and 3,4-dihydroxy-2-butanone 4-phosphate. Its function is as follows. Catalyzes the conversion of GTP to 2,5-diamino-6-ribosylamino-4(3H)-pyrimidinone 5'-phosphate (DARP), formate and pyrophosphate. The chain is Riboflavin biosynthesis protein RibBA from Nocardia farcinica (strain IFM 10152).